The primary structure comprises 339 residues: Dihydroorotate dehydrogenase (quinone) (339 aa).

Residues 62-66 (AGMDK) and Thr-86 each bind FMN. Lys-66 is a substrate binding site. Residue 111–115 (NRMGF) participates in substrate binding. Asn-139 and Asn-172 together coordinate FMN. Residue Asn-172 coordinates substrate. Residue Ser-175 is the Nucleophile of the active site. Residue Asn-177 participates in substrate binding. 2 residues coordinate FMN: Lys-217 and Thr-245. Residue 246-247 (NT) participates in substrate binding. FMN-binding positions include Gly-268, Gly-297, and 318-319 (YS).

Belongs to the dihydroorotate dehydrogenase family. Type 2 subfamily. Monomer. The cofactor is FMN.

It localises to the cell membrane. It carries out the reaction (S)-dihydroorotate + a quinone = orotate + a quinol. It functions in the pathway pyrimidine metabolism; UMP biosynthesis via de novo pathway; orotate from (S)-dihydroorotate (quinone route): step 1/1. In terms of biological role, catalyzes the conversion of dihydroorotate to orotate with quinone as electron acceptor. In Shewanella piezotolerans (strain WP3 / JCM 13877), this protein is Dihydroorotate dehydrogenase (quinone).